The sequence spans 757 residues: Serine/threonine-protein phosphatase with EF-hands 2 (757 aa).

The 26-residue stretch at K21 to N46 folds into the IQ domain. The catalytic stretch occupies residues A128–K544. Mn(2+)-binding residues include D179, H181, D208, and N240. H241 (proton donor) is an active-site residue. H292 serves as a coordination point for Mn(2+). A disordered region spans residues C318 to P349. Residues R321–N335 show a composition bias toward basic and acidic residues. Mn(2+) is bound at residue H492. EF-hand domains are found at residues A572–L607, R656–H691, and I696–S731. Ca(2+)-binding residues include D585, D587, S589, D596, D669, D671, S673, E680, D709, N711, D713, H715, and E720.

This sequence belongs to the PPP phosphatase family. Requires Mn(2+) as cofactor. Detected in retina, more specifically in photoreceptors.

It carries out the reaction O-phospho-L-seryl-[protein] + H2O = L-seryl-[protein] + phosphate. It catalyses the reaction O-phospho-L-threonyl-[protein] + H2O = L-threonyl-[protein] + phosphate. Activated by calcium. Its function is as follows. May play a role in phototransduction. May dephosphorylate photoactivated rhodopsin. May function as a calcium sensing regulator of ionic currents, energy production or synaptic transmission. The sequence is that of Serine/threonine-protein phosphatase with EF-hands 2 (Ppef2) from Mus musculus (Mouse).